A 480-amino-acid polypeptide reads, in one-letter code: Protein disulfide-isomerase 5-4 (480 aa).

2 N-linked (GlcNAc...) asparagine glycosylation sites follow: Asn74 and Asn99. The 144-residue stretch at 120–263 folds into the Thioredoxin domain; sequence FHAGEVLSLI…LVKMVVSLVE (144 aa). Residues Cys170 and Cys173 each act as nucleophile in the active site. A disulfide bridge connects residues Cys170 and Cys173. N-linked (GlcNAc...) asparagine glycans are attached at residues Asn280, Asn326, and Asn376. The helical transmembrane segment at 439 to 459 threads the bilayer; sequence FSHFITNVCAIIGGVFTVAGI.

It belongs to the protein disulfide isomerase family. As to expression, widely expressed.

The protein resides in the membrane. Functionally, acts as a protein-folding catalyst that interacts with nascent polypeptides to catalyze the formation, isomerization, and reduction or oxidation of disulfide bonds. This chain is Protein disulfide-isomerase 5-4 (PDIL5-4), found in Arabidopsis thaliana (Mouse-ear cress).